The sequence spans 1108 residues: Alpha-mannosidase 2 (1108 aa).

Topologically, residues 1 to 9 (MLRIRRRFA) are cytoplasmic. A helical; Signal-anchor for type II membrane protein transmembrane segment spans residues 10 to 30 (LVICSGCLLVFLSLYIILNFA). At 31-1108 (APAATQIKPN…TAAYVSSHSS (1078 aa)) the chain is on the lumenal side. Residues 70–92 (AETSNRDDPIRPPLKVARSPRPG) are disordered. Residues His153, Asp155, Asp267, and His534 each coordinate Zn(2+). Asp267 serves as the catalytic Nucleophile.

The protein belongs to the glycosyl hydrolase 38 family. Homodimer; disulfide-linked. Zn(2+) is required as a cofactor.

Its subcellular location is the golgi apparatus membrane. The catalysed reaction is N(4)-{beta-D-GlcNAc-(1-&gt;2)-alpha-D-Man-(1-&gt;3)-[alpha-D-Man-(1-&gt;3)-[alpha-D-Man-(1-&gt;6)]-alpha-D-Man-(1-&gt;6)]-beta-D-Man-(1-&gt;4)-beta-D-GlcNAc-(1-&gt;4)-beta-D-GlcNAc}-L-asparaginyl-[protein] + 2 H2O = 2 alpha-D-mannopyranose + an N(4)-{beta-D-GlcNAc-(1-&gt;2)-alpha-D-Man-(1-&gt;3)-[alpha-D-Man-(1-&gt;6)]-beta-D-Man-(1-&gt;4)-beta-D-GlcNAc-(1-&gt;4)-beta-D-GlcNAc}-L-asparaginyl-[protein]. Its pathway is protein modification; protein glycosylation. Its function is as follows. Catalyzes the first committed step in the biosynthesis of complex N-glycans. It controls conversion of high mannose to complex N-glycans; the final hydrolytic step in the N-glycan maturation pathway. This Drosophila melanogaster (Fruit fly) protein is Alpha-mannosidase 2.